Here is a 395-residue protein sequence, read N- to C-terminus: Chorismate synthase (395 aa).

The protein belongs to the chorismate synthase family. As to quaternary structure, homotetramer. The cofactor is FMNH2.

The enzyme catalyses 5-O-(1-carboxyvinyl)-3-phosphoshikimate = chorismate + phosphate. It functions in the pathway metabolic intermediate biosynthesis; chorismate biosynthesis; chorismate from D-erythrose 4-phosphate and phosphoenolpyruvate: step 7/7. The chain is Chorismate synthase from Schizosaccharomyces pombe (strain 972 / ATCC 24843) (Fission yeast).